We begin with the raw amino-acid sequence, 132 residues long: Large ribosomal subunit protein uL14 (132 aa).

This sequence belongs to the universal ribosomal protein uL14 family. In terms of assembly, part of the 50S ribosomal subunit. Forms a cluster with proteins L3 and L24e, part of which may contact the 16S rRNA in 2 intersubunit bridges.

Binds to 23S rRNA. Forms part of two intersubunit bridges in the 70S ribosome. This chain is Large ribosomal subunit protein uL14, found in Methanospirillum hungatei JF-1 (strain ATCC 27890 / DSM 864 / NBRC 100397 / JF-1).